The sequence spans 72 residues: Gene 79 protein (72 aa).

This is Gene 79 protein (79) from Mycobacterium (Mycobacteriophage L5).